The sequence spans 279 residues: Urease accessory protein UreD (279 aa).

The protein belongs to the UreD family. UreD, UreF and UreG form a complex that acts as a GTP-hydrolysis-dependent molecular chaperone, activating the urease apoprotein by helping to assemble the nickel containing metallocenter of UreC. The UreE protein probably delivers the nickel.

Its subcellular location is the cytoplasm. In terms of biological role, required for maturation of urease via the functional incorporation of the urease nickel metallocenter. The sequence is that of Urease accessory protein UreD from Streptococcus salivarius (strain 57.I).